A 232-amino-acid chain; its full sequence is Very-long-chain (3R)-3-hydroxyacyl-CoA dehydratase 4 (232 aa).

Topologically, residues Met-1–Tyr-19 are cytoplasmic. A helical membrane pass occupies residues Leu-20–Val-40. Residues Arg-41–Ala-56 lie on the Lumenal side of the membrane. A helical transmembrane segment spans residues Ile-57 to Ile-77. Topologically, residues Gly-78 to Cys-112 are cytoplasmic. Residues Val-113–Met-133 form a helical membrane-spanning segment. The Lumenal segment spans residues Leu-134–Ser-135. The chain crosses the membrane as a helical span at residues Val-136–Tyr-156. Tyr-156 is a catalytic residue. Pro-157 is a topological domain (cytoplasmic). The chain crosses the membrane as a helical span at residues Leu-158–Gly-178. Glu-163 is a catalytic residue. Over Thr-179–Ser-189 the chain is Lumenal. The chain crosses the membrane as a helical span at residues Thr-190–Thr-210. At Tyr-211–Val-232 the chain is on the cytoplasmic side.

It belongs to the very long-chain fatty acids dehydratase HACD family. May interact with enzymes of the ELO family (including ELOVL1); with those enzymes that mediate condensation, the first of the four steps of the reaction cycle responsible for fatty acids elongation, may be part of a larger fatty acids elongase complex.

Its subcellular location is the endoplasmic reticulum membrane. It catalyses the reaction a very-long-chain (3R)-3-hydroxyacyl-CoA = a very-long-chain (2E)-enoyl-CoA + H2O. The enzyme catalyses (3R)-hydroxyhexadecanoyl-CoA = (2E)-hexadecenoyl-CoA + H2O. It participates in lipid metabolism; fatty acid biosynthesis. Functionally, catalyzes the third of the four reactions of the long-chain fatty acids elongation cycle. This endoplasmic reticulum-bound enzymatic process, allows the addition of two carbons to the chain of long- and very long-chain fatty acids/VLCFAs per cycle. This enzyme catalyzes the dehydration of the 3-hydroxyacyl-CoA intermediate into trans-2,3-enoyl-CoA, within each cycle of fatty acid elongation. Thereby, it participates in the production of VLCFAs of different chain lengths that are involved in multiple biological processes as precursors of membrane lipids and lipid mediators. This chain is Very-long-chain (3R)-3-hydroxyacyl-CoA dehydratase 4, found in Mus musculus (Mouse).